Consider the following 207-residue polypeptide: Charged multivesicular body protein 3 (207 aa).

The interval 174–207 (QVSSAPLETHQQEEVVQEKQEDSELLDRLKALKS) is disordered. Residues 183 to 207 (HQQEEVVQEKQEDSELLDRLKALKS) are a coiled coil. Basic and acidic residues predominate over residues 183–207 (HQQEEVVQEKQEDSELLDRLKALKS).

Belongs to the SNF7 family. As to quaternary structure, probable core component of the endosomal sorting required for transport complex III (ESCRT-III).

The protein resides in the endosome membrane. In terms of biological role, probable core component of the endosomal sorting required for transport complex III (ESCRT-III) which is involved in multivesicular bodies (MVBs) formation and sorting of endosomal cargo proteins into MVBs. MVBs contain intraluminal vesicles (ILVs) that are generated by invagination and scission from the limiting membrane of the endosome and are delivered to lysosomes enabling degradation of membrane proteins. This chain is Charged multivesicular body protein 3 (chmp3), found in Dictyostelium discoideum (Social amoeba).